We begin with the raw amino-acid sequence, 739 residues long: DNA ligase (739 aa).

34–38 (DADYD) is an NAD(+) binding site. Basic and acidic residues predominate over residues 49-59 (ARFPHLKRPDS). The disordered stretch occupies residues 49–70 (ARFPHLKRPDSPSEQVGARPGE). Residues 83–84 (SL) and E117 contribute to the NAD(+) site. K119 functions as the N6-AMP-lysine intermediate in the catalytic mechanism. The NAD(+) site is built by R140, E175, K291, and K315. 4 residues coordinate Zn(2+): C420, C423, C438, and C444. The BRCT domain maps to 660-739 (ARDSPVAGKT…DGWLKLIEGL (80 aa)).

Belongs to the NAD-dependent DNA ligase family. LigA subfamily. Requires Mg(2+) as cofactor. Mn(2+) serves as cofactor.

The enzyme catalyses NAD(+) + (deoxyribonucleotide)n-3'-hydroxyl + 5'-phospho-(deoxyribonucleotide)m = (deoxyribonucleotide)n+m + AMP + beta-nicotinamide D-nucleotide.. Functionally, DNA ligase that catalyzes the formation of phosphodiester linkages between 5'-phosphoryl and 3'-hydroxyl groups in double-stranded DNA using NAD as a coenzyme and as the energy source for the reaction. It is essential for DNA replication and repair of damaged DNA. The chain is DNA ligase from Ruegeria pomeroyi (strain ATCC 700808 / DSM 15171 / DSS-3) (Silicibacter pomeroyi).